A 359-amino-acid polypeptide reads, in one-letter code: Fructose-1,6-bisphosphatase class 1 (359 aa).

E95, D117, L119, and D120 together coordinate Mg(2+). Residues 120–123 (DGSS) and N212 each bind substrate. E284 is a binding site for Mg(2+).

It belongs to the FBPase class 1 family. Homotetramer. Mg(2+) is required as a cofactor.

It is found in the cytoplasm. The catalysed reaction is beta-D-fructose 1,6-bisphosphate + H2O = beta-D-fructose 6-phosphate + phosphate. It participates in carbohydrate biosynthesis; gluconeogenesis. The polypeptide is Fructose-1,6-bisphosphatase class 1 (Hydrogenophilus thermoluteolus (Pseudomonas hydrogenothermophila)).